The chain runs to 304 residues: GDP-6-deoxy-D-mannose reductase (304 aa).

Residues 13–14 (FV) and 39–40 (DL) contribute to the NADP(+) site. Residue 105–106 (SG) participates in substrate binding. Y131 contacts NADP(+). Substrate-binding positions include N160, R200, and 260–263 (RRAE).

It belongs to the NAD(P)-dependent epimerase/dehydratase family. GDP-6-deoxy-D-mannose reductase subfamily.

It carries out the reaction GDP-alpha-D-rhamnose + NAD(+) = GDP-4-dehydro-alpha-D-rhamnose + NADH + H(+). The catalysed reaction is GDP-alpha-D-rhamnose + NADP(+) = GDP-4-dehydro-alpha-D-rhamnose + NADPH + H(+). Functionally, reductase that catalyzes the conversion of GDP-6-deoxy-D-mannose to GDP-4-dehydro-6-deoxy-D-mannose (GDP-D-rhamnose). This Pseudomonas aeruginosa (strain ATCC 15692 / DSM 22644 / CIP 104116 / JCM 14847 / LMG 12228 / 1C / PRS 101 / PAO1) protein is GDP-6-deoxy-D-mannose reductase (rmd).